The chain runs to 30 residues: Trypsin inhibitor 1 (30 aa).

3 disulfide bridges follow: Cys-4/Cys-21, Cys-11/Cys-23, and Cys-17/Cys-29.

The protein belongs to the protease inhibitor I7 (squash-type serine protease inhibitor) family.

It is found in the secreted. Inhibits trypsin. This chain is Trypsin inhibitor 1, found in Citrullus lanatus (Watermelon).